Consider the following 145-residue polypeptide: Neuromedin-S (145 aa).

The N-terminal stretch at 1–27 (MRSEKHLPPLPLLLAICCLGTLHPSSG) is a signal peptide. 2 propeptides span residues 28 to 89 (FPQS…HEIY) and 92 to 117 (FLFQ…AEYT). Asn136 is subject to Asparagine amide. Positions 140–145 (VSINEH) are excised as a propeptide.

This sequence belongs to the NmU family. In terms of tissue distribution, expressed by the skin glands.

It is found in the secreted. Its function is as follows. Stimulates uterine smooth muscle contraction. Synthetic peptide NmS-17 induces calcium mobilization in CHO cells transfected with either human FM-3/GPR66 (EC(50)=0.085 nM) or FM-4/TGR-1 (EC(50)=0.231 nM) NmU/NmS receptors. In Bombina orientalis (Oriental fire-bellied toad), this protein is Neuromedin-S (nms).